Consider the following 953-residue polypeptide: Catenin alpha-2 (953 aa).

T632 bears the Phosphothreonine mark. Phosphoserine occurs at positions 640, 651, and 901. Positions 912 to 927 are enriched in basic and acidic residues; sequence EKKPLVKREKPEEFQT. The disordered stretch occupies residues 912 to 939; that stretch reads EKKPLVKREKPEEFQTRVRRGSQKKHIS. Basic residues predominate over residues 928–938; it reads RVRRGSQKKHI. S939 is modified (phosphoserine).

The protein belongs to the vinculin/alpha-catenin family. In terms of assembly, interacts with CDH1 and CDH2. Interacts with ZNF639; recruits CTNNA2 to the nucleus. Interacts with F-actin. In terms of tissue distribution, expressed almost exclusively in the nervous system.

It is found in the cell membrane. Its subcellular location is the cytoplasm. It localises to the cytoskeleton. The protein localises to the cell junction. The protein resides in the adherens junction. It is found in the cell projection. Its subcellular location is the axon. It localises to the nucleus. Functionally, may function as a linker between cadherin adhesion receptors and the cytoskeleton to regulate cell-cell adhesion and differentiation in the nervous system. Required for proper regulation of cortical neuronal migration and neurite growth. It acts as a negative regulator of Arp2/3 complex activity and Arp2/3-mediated actin polymerization. It thereby suppresses excessive actin branching which would impair neurite growth and stability. Regulates morphological plasticity of synapses and cerebellar and hippocampal lamination during development. Functions in the control of startle modulation. The sequence is that of Catenin alpha-2 (Ctnna2) from Mus musculus (Mouse).